The sequence spans 376 residues: Polygalacturonase (376 aa).

Positions 1–20 (MASSLKLGLIALLGATAVNA) are cleaved as a signal peptide. Cysteines 39 and 57 form a disulfide. One copy of the PbH1 1 repeat lies at 170 to 208 (AKELTLSGITVDTADGDSNGGHNTDAFDVGSSNGVYITS). Aspartate 215 serves as the catalytic Proton donor. An intrachain disulfide couples cysteine 217 to cysteine 233. PbH1 repeat units follow at residues 223–243 (GTNV…SIGS), 252–273 (VDGV…RIKT), 281–303 (VQGV…VIEQ), and 315–360 (TSGV…SITG). Residue histidine 237 is part of the active site. 2 disulfides stabilise this stretch: cysteine 343-cysteine 348 and cysteine 367-cysteine 376.

This sequence belongs to the glycosyl hydrolase 28 family.

It is found in the secreted. The catalysed reaction is (1,4-alpha-D-galacturonosyl)n+m + H2O = (1,4-alpha-D-galacturonosyl)n + (1,4-alpha-D-galacturonosyl)m.. The polypeptide is Polygalacturonase (PGG1) (Penicillium griseoroseum).